The chain runs to 453 residues: Ribulose bisphosphate carboxylase large chain (453 aa).

A propeptide spanning residues 1-2 (MS) is cleaved from the precursor. Position 3 is an N-acetylproline (Pro-3). Lys-14 bears the N6,N6,N6-trimethyllysine mark. The substrate site is built by Asn-123 and Thr-173. Lys-175 serves as the catalytic Proton acceptor. A substrate-binding site is contributed by Lys-177. Mg(2+) contacts are provided by Lys-201, Asp-203, and Glu-204. Lys-201 is subject to N6-carboxylysine. His-294 (proton acceptor) is an active-site residue. The substrate site is built by Arg-295, His-327, and Ser-379.

Belongs to the RuBisCO large chain family. Type I subfamily. As to quaternary structure, heterohexadecamer of 8 large chains and 8 small chains; disulfide-linked. The disulfide link is formed within the large subunit homodimers. It depends on Mg(2+) as a cofactor. In terms of processing, the disulfide bond which can form in the large chain dimeric partners within the hexadecamer appears to be associated with oxidative stress and protein turnover.

Its subcellular location is the plastid. It is found in the chloroplast. It catalyses the reaction 2 (2R)-3-phosphoglycerate + 2 H(+) = D-ribulose 1,5-bisphosphate + CO2 + H2O. It carries out the reaction D-ribulose 1,5-bisphosphate + O2 = 2-phosphoglycolate + (2R)-3-phosphoglycerate + 2 H(+). Functionally, ruBisCO catalyzes two reactions: the carboxylation of D-ribulose 1,5-bisphosphate, the primary event in carbon dioxide fixation, as well as the oxidative fragmentation of the pentose substrate in the photorespiration process. Both reactions occur simultaneously and in competition at the same active site. This is Ribulose bisphosphate carboxylase large chain from Cruciata glabra (Slender crosswort).